The chain runs to 377 residues: GTPase Obg (377 aa).

The region spanning 1–159 is the Obg domain; sequence MKFVDEATIE…RRLRMELKVL (159 aa). The tract at residues 127 to 148 is disordered; sequence NIHFKSSTNRAPRQWTPGKEGE. One can recognise an OBG-type G domain in the interval 160–336; that stretch reads ADVGLLGLPN…LIWALQDYLD (177 aa). GTP-binding positions include 166–173, 191–195, 213–216, 288–291, and 317–319; these read GLPNAGKS, FTTLH, DIPG, NKLD, and SGL. Mg(2+) contacts are provided by Ser-173 and Thr-193. The interval 339–377 is disordered; sequence KRKDQDAQDQADGTYVFEDPRFDASRGGAAPATPPGGDE.

This sequence belongs to the TRAFAC class OBG-HflX-like GTPase superfamily. OBG GTPase family. Monomer. The cofactor is Mg(2+).

It localises to the cytoplasm. In terms of biological role, an essential GTPase which binds GTP, GDP and possibly (p)ppGpp with moderate affinity, with high nucleotide exchange rates and a fairly low GTP hydrolysis rate. Plays a role in control of the cell cycle, stress response, ribosome biogenesis and in those bacteria that undergo differentiation, in morphogenesis control. This chain is GTPase Obg, found in Bordetella bronchiseptica (strain ATCC BAA-588 / NCTC 13252 / RB50) (Alcaligenes bronchisepticus).